Here is a 419-residue protein sequence, read N- to C-terminus: Tyrosine--tRNA ligase (419 aa).

Tyr42 provides a ligand contact to L-tyrosine. Residues 47–56 carry the 'HIGH' region motif; that stretch reads CTAPSLHVGS. L-tyrosine-binding residues include Tyr179 and Gln183. The short motif at 239-243 is the 'KMSKS' region element; it reads KMGKT. Lys242 provides a ligand contact to ATP. In terms of domain architecture, S4 RNA-binding spans 353 to 419; that stretch reads LGVLAAFVKA…RKRHVLLKLV (67 aa).

It belongs to the class-I aminoacyl-tRNA synthetase family. TyrS type 1 subfamily. As to quaternary structure, homodimer.

The protein resides in the cytoplasm. It carries out the reaction tRNA(Tyr) + L-tyrosine + ATP = L-tyrosyl-tRNA(Tyr) + AMP + diphosphate + H(+). Its function is as follows. Catalyzes the attachment of tyrosine to tRNA(Tyr) in a two-step reaction: tyrosine is first activated by ATP to form Tyr-AMP and then transferred to the acceptor end of tRNA(Tyr). This Methylocella silvestris (strain DSM 15510 / CIP 108128 / LMG 27833 / NCIMB 13906 / BL2) protein is Tyrosine--tRNA ligase.